Consider the following 345-residue polypeptide: Papain (345 aa).

The N-terminal stretch at 1–18 (MAMIPSISKLLFVAICLF) is a signal peptide. Residues 19–133 (VYMGLSFGDF…EEVLNDGDVN (115 aa)) constitute a propeptide, activation peptide. Cystine bridges form between cysteine 155/cysteine 196, cysteine 189/cysteine 228, and cysteine 286/cysteine 333. Cysteine 158 is an active-site residue. E64 is bound at residue cysteine 158. Cysteine 158 provides a ligand contact to leupeptin. Residues histidine 292 and asparagine 308 contribute to the active site.

This sequence belongs to the peptidase C1 family.

It carries out the reaction Hydrolysis of proteins with broad specificity for peptide bonds, but preference for an amino acid bearing a large hydrophobic side chain at the P2 position. Does not accept Val in P1'.. Its activity is regulated as follows. Repressed by the active-site-directed cysteine protease inhibitor E64 (L-trans-epoxysuccinyl-leucylamide-(4-guanido)-butane) produced by Aspergillus japonicus. Inhibited by the inhibitor of cysteine proteases from Trypanosoma brucei (TbICP, rhodesain) and Colocasia esculenta cv. Kaohsiung no. 1 (CeCPI, tarocystatin). Repressed by leupeptin, a peptidic cysteine, serine and threonine protease inhibitor. Its function is as follows. Cysteine proteinase with a high level of diversity in substrate specificity, an amino acid bearing a large hydrophobic side chain at the P2 position is preferred. The sequence is that of Papain from Carica papaya (Papaya).